Consider the following 369-residue polypeptide: Flagellar P-ring protein (369 aa).

The N-terminal stretch at M1–A22 is a signal peptide.

Belongs to the FlgI family. As to quaternary structure, the basal body constitutes a major portion of the flagellar organelle and consists of four rings (L,P,S, and M) mounted on a central rod.

Its subcellular location is the periplasm. The protein localises to the bacterial flagellum basal body. Its function is as follows. Assembles around the rod to form the L-ring and probably protects the motor/basal body from shearing forces during rotation. The chain is Flagellar P-ring protein from Pseudomonas fluorescens (strain ATCC BAA-477 / NRRL B-23932 / Pf-5).